Here is a 364-residue protein sequence, read N- to C-terminus: Chorismate synthase (364 aa).

Residues 41–60 (MQHDLDRRRPGTSRYTTARR) are disordered. Positions 48 and 54 each coordinate NADP(+). Residues 125–127 (RSS), 238–239 (NA), G278, 293–297 (KPTSS), and R319 each bind FMN.

This sequence belongs to the chorismate synthase family. As to quaternary structure, homotetramer. FMNH2 is required as a cofactor.

The enzyme catalyses 5-O-(1-carboxyvinyl)-3-phosphoshikimate = chorismate + phosphate. It participates in metabolic intermediate biosynthesis; chorismate biosynthesis; chorismate from D-erythrose 4-phosphate and phosphoenolpyruvate: step 7/7. Functionally, catalyzes the anti-1,4-elimination of the C-3 phosphate and the C-6 proR hydrogen from 5-enolpyruvylshikimate-3-phosphate (EPSP) to yield chorismate, which is the branch point compound that serves as the starting substrate for the three terminal pathways of aromatic amino acid biosynthesis. This reaction introduces a second double bond into the aromatic ring system. The sequence is that of Chorismate synthase from Shewanella sp. (strain MR-4).